The primary structure comprises 424 residues: UDP-N-acetylglucosamine 1-carboxyvinyltransferase (424 aa).

22–23 provides a ligand contact to phosphoenolpyruvate; that stretch reads KN. Arg-93 is a binding site for UDP-N-acetyl-alpha-D-glucosamine. Cys-117 serves as the catalytic Proton donor. Cys-117 is modified (2-(S-cysteinyl)pyruvic acid O-phosphothioketal). UDP-N-acetyl-alpha-D-glucosamine-binding positions include 122–126, Asp-307, and Val-329; that span reads RPIDL.

It belongs to the EPSP synthase family. MurA subfamily.

It is found in the cytoplasm. It carries out the reaction phosphoenolpyruvate + UDP-N-acetyl-alpha-D-glucosamine = UDP-N-acetyl-3-O-(1-carboxyvinyl)-alpha-D-glucosamine + phosphate. It participates in cell wall biogenesis; peptidoglycan biosynthesis. In terms of biological role, cell wall formation. Adds enolpyruvyl to UDP-N-acetylglucosamine. The polypeptide is UDP-N-acetylglucosamine 1-carboxyvinyltransferase (Pelodictyon phaeoclathratiforme (strain DSM 5477 / BU-1)).